The sequence spans 430 residues: Stress protein DDR48 (430 aa).

The segment at 1–430 (MGLFDKVKQF…RNQYGGDDDY (430 aa)) is disordered. Positions 12–27 (NSNNNNNDSGNNNQGD) are enriched in low complexity. Basic and acidic residues predominate over residues 37–60 (GEDRVNQFKSKIGEDRFDKMESKV). A compositionally biased stretch (low complexity) spans 70–421 (NDNDSNNNDS…SYGSSNRGGR (352 aa)). Repeat copies occupy residues 74–81 (SNNNDSYG), 82–89 (SNNNDSYG), 90–97 (SNNNDSYG), 98–105 (SNNNDSYG), 106–113 (SNNNDSYG), and 114–121 (SNNDDSYG). Residues 74–414 (SNNNDSYGSN…GSSNNDDSYG (341 aa)) are 38 X 8 AA approximate tandem repeats of S-[NS]-N-[ND]-D-S-Y-G. The 7; approximate repeat unit spans residues 124-131 (NKKKSSYG). 5 consecutive repeat copies span residues 132 to 139 (SNNDDSYG), 141 to 148 (SNNNDSYG), 149 to 156 (SNNNDSYG), 157 to 164 (SNNNDSYG), and 165 to 172 (SNNDDSYG). The 13; approximate repeat unit spans residues 175–182 (NKNKSSYG). Serine 183 and serine 191 each carry phosphoserine. A run of 2 repeats spans residues 183–190 (SNNDDSYG) and 191–198 (SNNDDSYG). One copy of the 16; approximate repeat lies at 201–208 (NKKKSSYG). A run of 4 repeats spans residues 209 to 216 (SSNNDSYG), 217 to 224 (SNNDDSYG), 225 to 232 (SNNNDSYG), and 233 to 240 (SNNDDSYG). The 21; approximate repeat unit spans residues 243-250 (NKKKSSYG). Tandem repeats lie at residues 251–258 (SNNDDSYG), 260–267 (SNNNDSYG), and 268–275 (SNNDDSYG). A 25; approximate repeat occupies 278–285 (NKNKSSYG). 2 consecutive repeat copies span residues 287 to 294 (SSNDDSYG) and 296 to 303 (SNNDDSYG). A 28; approximate repeat occupies 306 to 313 (NKKKSSYG). Serine 314 and serine 322 each carry phosphoserine. Tandem repeats lie at residues 314–321 (SNNDDSYG) and 322–329 (SNNDDSYG). One copy of the 31; approximate repeat lies at 332–339 (NKKKSSYG). 2 repeat units span residues 340 to 347 (SSNNDSYG) and 348 to 355 (SNNDDSYG). The 34; approximate repeat unit spans residues 358 to 365 (NKKKSSYG). Repeat copies occupy residues 366–373 (SNNDDSYG) and 375–382 (SNNNDSYG). The 37; approximate repeat unit spans residues 393 to 400 (NRNKNSYG). Residues 407–414 (SNNDDSYG) form repeat 38.

The protein belongs to the DDR48 family. In terms of processing, probably highly glycosylated.

In terms of biological role, DNA damage-responsive protein that may be required for maintaining the rate of spontaneous mutagenesis. Shows low ATP and GTP hydrolysis activity. Dispensable for acquisition of thermotolerance and does not play a significant role in recovery or protection of cells from acute heat shock. The protein is Stress protein DDR48 (DDR48) of Saccharomyces cerevisiae (strain ATCC 204508 / S288c) (Baker's yeast).